Reading from the N-terminus, the 148-residue chain is Small ribosomal subunit protein uS12 (148 aa).

The protein belongs to the universal ribosomal protein uS12 family. In terms of assembly, part of the 30S ribosomal subunit.

With S4 and S5 plays an important role in translational accuracy. Located at the interface of the 30S and 50S subunits. This Methanocaldococcus jannaschii (strain ATCC 43067 / DSM 2661 / JAL-1 / JCM 10045 / NBRC 100440) (Methanococcus jannaschii) protein is Small ribosomal subunit protein uS12.